A 115-amino-acid polypeptide reads, in one-letter code: Putative HNH nuclease YajD (115 aa).

Residues 27 to 75 form the HNH domain; that stretch reads CGRCSREFVYSNLRELTVHHIDHDHTNNPEDGSNWELLCLYCHDHEHSK.

The protein belongs to the HNH nuclease family.

This is Putative HNH nuclease YajD (yajD) from Salmonella typhi.